Here is a 60-residue protein sequence, read N- to C-terminus: Metallothionein (60 aa).

A beta region spans residues 1 to 28; it reads MDPCECSKTGKCSCGGSCTCTNCSCTSC. Residues Cys-4, Cys-6, Cys-12, Cys-14, Cys-18, Cys-20, Cys-23, Cys-25, Cys-28, Cys-32, Cys-33, Cys-35, Cys-36, Cys-40, Cys-43, Cys-47, Cys-49, Cys-54, Cys-58, and Cys-59 each contribute to the a divalent metal cation site. The alpha stretch occupies residues 29–60; it reads KKSCCPCCPSGCSKCASGCVCKGKTCDTSCCQ.

It belongs to the metallothionein superfamily. Type 1 family.

Its function is as follows. Metallothioneins have a high content of cysteine residues that bind various heavy metals. The sequence is that of Metallothionein (mt) from Chelon auratus (Golden grey mullet).